The chain runs to 349 residues: MDLGEIVEDVKREINLNEMKGKKISIDAYNTIYQFLAAIRQPDGTPLIDSKGRITSHLNGLFYRTISIIESGIIPIFVFDGKPPEKKSEEIERRKRAKEEAEKKLEKAKLEGEYREIRKYAQAAVRLSNEMVEESKKLLDAMGIPVVQAPGEGEAEAAYINSIDLSWAAASQDYDSLLFGAKRLVRNITISGKRKLPNKDVYVEIKPELIELESLLKKLGINREQLIDIAILIGTDYNPDGVKGIGVKTALRIIKKYNNIENAIEKGEIQLSKINFDIREIRKLFITPEVKKPTERLELAECNEREIIELLVKNHDFNEDRVNNGIERLKKAIKEAKSVEKQTGLDQWF.

Residues methionine 1 to lysine 98 form an N-domain region. The Mg(2+) site is built by aspartate 27, aspartate 80, glutamate 152, glutamate 154, aspartate 173, aspartate 175, and aspartate 236. An I-domain region spans residues glutamate 116 to asparagine 258. Residues lysine 341 to phenylalanine 349 form an interaction with PCNA region.

The protein belongs to the XPG/RAD2 endonuclease family. FEN1 subfamily. Interacts with PCNA. PCNA stimulates the nuclease activity without altering cleavage specificity. Requires Mg(2+) as cofactor.

Functionally, structure-specific nuclease with 5'-flap endonuclease and 5'-3' exonuclease activities involved in DNA replication and repair. During DNA replication, cleaves the 5'-overhanging flap structure that is generated by displacement synthesis when DNA polymerase encounters the 5'-end of a downstream Okazaki fragment. Binds the unpaired 3'-DNA end and kinks the DNA to facilitate 5' cleavage specificity. Cleaves one nucleotide into the double-stranded DNA from the junction in flap DNA, leaving a nick for ligation. Also involved in the base excision repair (BER) pathway. Acts as a genome stabilization factor that prevents flaps from equilibrating into structures that lead to duplications and deletions. Also possesses 5'-3' exonuclease activity on nicked or gapped double-stranded DNA. In Sulfolobus acidocaldarius (strain ATCC 33909 / DSM 639 / JCM 8929 / NBRC 15157 / NCIMB 11770), this protein is Flap endonuclease 1.